Here is a 188-residue protein sequence, read N- to C-terminus: Putative lipoprotein LprB (188 aa).

The N-terminal stretch at 1–27 (MRCDVRALALAARGLIELMIVIPMVAG) is a signal peptide. A lipid anchor (N-palmitoyl cysteine) is attached at C28. The S-diacylglycerol cysteine moiety is linked to residue C28.

The protein localises to the cell membrane. This chain is Putative lipoprotein LprB (lprB), found in Mycobacterium leprae (strain TN).